Here is a 518-residue protein sequence, read N- to C-terminus: Calcium and calcium/calmodulin-dependent serine/threonine-protein kinase (518 aa).

The region spanning Y13–V300 is the Protein kinase domain. ATP contacts are provided by residues L19–V27 and K44. D165 serves as the catalytic Proton acceptor. Residue T265 is modified to Phosphothreonine. A calmodulin-binding region spans residues A323–W336. A coiled-coil region spans residues T344 to R365. 3 EF-hand domains span residues S394 to S429, K430 to E465, and T472 to L507. D407, N409, D411, T413, E418, D443, D445, S447, C449, E454, D485, N487, D489, K491, and E496 together coordinate Ca(2+).

Belongs to the protein kinase superfamily. CAMK Ser/Thr protein kinase family. CaMK subfamily. In terms of assembly, interacts with IPD3. Interacts with CIP73. Autophosphorylation stimulated by calcium. Occurs probably by an intermolecular mechanism. Mainly expressed in roots and nodules. Detected in leaves, stems and cotyledons.

The protein resides in the nucleus. It catalyses the reaction L-seryl-[protein] + ATP = O-phospho-L-seryl-[protein] + ADP + H(+). It carries out the reaction L-threonyl-[protein] + ATP = O-phospho-L-threonyl-[protein] + ADP + H(+). With respect to regulation, activated by calcium/calmodulin binding after calcium-induced autophosphorylation. In terms of biological role, calcium- and calmodulin-dependent protein kinase necessary and sufficient for dedifferentiation of root cortical cells into nodule initials. Not required for calcium spiking. Acts as central regulator of the nodule organogenesis program. Required for root hair curling and infection thread (IT) formation upon rhizobial infection, and arbuscule formation during arbuscular mycorrhiza (AM) fungal infection. Phosphorylates the downstream target IPD3, a protein required for root infection by symbiotic rhizobia and AM fungi. Phosphorylates the downstream target CIP73, a protein required for root nodule organogenesis. Mediates the phosphorylation of leghemoglobins (e.g. LB1) to modulate their oxygen O(2) affinity, thus regulating the diffusion of oxygen to the bacteroids in nodules. This Lotus japonicus (Lotus corniculatus var. japonicus) protein is Calcium and calcium/calmodulin-dependent serine/threonine-protein kinase.